The sequence spans 465 residues: Kynureninase (465 aa).

Pyridoxal 5'-phosphate is bound by residues L133, T134, 161–164 (FPSD), S217, D246, H249, and Y271. At K272 the chain carries N6-(pyridoxal phosphate)lysine. Residues W302 and N330 each contribute to the pyridoxal 5'-phosphate site.

The protein belongs to the kynureninase family. As to quaternary structure, homodimer. Pyridoxal 5'-phosphate is required as a cofactor.

It is found in the cytoplasm. It catalyses the reaction L-kynurenine + H2O = anthranilate + L-alanine + H(+). The enzyme catalyses 3-hydroxy-L-kynurenine + H2O = 3-hydroxyanthranilate + L-alanine + H(+). It participates in amino-acid degradation; L-kynurenine degradation; L-alanine and anthranilate from L-kynurenine: step 1/1. Its pathway is cofactor biosynthesis; NAD(+) biosynthesis; quinolinate from L-kynurenine: step 2/3. Functionally, catalyzes the cleavage of L-kynurenine (L-Kyn) and L-3-hydroxykynurenine (L-3OHKyn) into anthranilic acid (AA) and 3-hydroxyanthranilic acid (3-OHAA), respectively. This Nematostella vectensis (Starlet sea anemone) protein is Kynureninase.